We begin with the raw amino-acid sequence, 216 residues long: Thiopurine S-methyltransferase (216 aa).

Residues tryptophan 11, leucine 46, glutamate 67, and arginine 122 each coordinate S-adenosyl-L-methionine.

This sequence belongs to the class I-like SAM-binding methyltransferase superfamily. TPMT family.

It localises to the cytoplasm. The enzyme catalyses S-adenosyl-L-methionine + a thiopurine = S-adenosyl-L-homocysteine + a thiopurine S-methylether.. The sequence is that of Thiopurine S-methyltransferase from Vibrio campbellii (strain ATCC BAA-1116).